Consider the following 122-residue polypeptide: Large ribosomal subunit protein uL14 (122 aa).

The protein belongs to the universal ribosomal protein uL14 family. In terms of assembly, part of the 50S ribosomal subunit. Forms a cluster with proteins L3 and L19. In the 70S ribosome, L14 and L19 interact and together make contacts with the 16S rRNA in bridges B5 and B8.

Its function is as follows. Binds to 23S rRNA. Forms part of two intersubunit bridges in the 70S ribosome. The polypeptide is Large ribosomal subunit protein uL14 (Acinetobacter baylyi (strain ATCC 33305 / BD413 / ADP1)).